Here is a 549-residue protein sequence, read N- to C-terminus: NAC domain-containing protein 53 (549 aa).

In terms of domain architecture, NAC spans 9-159 (LAPGFRFHPT…AFVLCRIFQK (151 aa)). Residues 108-165 (VGMKKTLVYHKGRAPRGERTNWVMHEYRLVDQDLDKTGVHQDAFVLCRIFQKSGSGPK) mediate DNA binding. Residues 395–416 (LEKEETSRSKHVVEEKEKDEAS) show a composition bias toward basic and acidic residues. The disordered stretch occupies residues 395 to 418 (LEKEETSRSKHVVEEKEKDEASCS). Residues 526–546 (LIFMCFWVLLLSVSFKVSILV) form a helical membrane-spanning segment.

Expressed in roots, rosette leaves, cauline leaves, shoot apex and stems.

The protein localises to the endoplasmic reticulum membrane. Its subcellular location is the nucleus. Functionally, transcriptional activator activated by proteolytic cleavage through regulated intramembrane proteolysis (RIP). Promotes reactive oxygen species (ROS) production during drought-induced leaf senescence. In response to abscisic acid (ABA)-mediated drought stress signals, binds directly to the promoters of RBOHC and RBOHE genes, encoding ROS biosynthetic enzymes, resulting in ROS accumulation and triggering leaf senescence via programmed cell death (PCD). ROS-induced leaf senescence sustains plant survival under drought conditions. Involved in heat stress response. Modulates PCD through a ROS-mediated positive feedback control under heat stress conditions. This may provide an adaptation strategy for plant survival under extreme heat stress conditions. Acts as a repressor in preventing anther dehiscence during stamen development by suppressing genes that participate in jasmonic acid (JA) biosynthesis, such as DAD1, AOS, AOC3, OPR3 and 4CLL5/OPCL1. The polypeptide is NAC domain-containing protein 53 (Arabidopsis thaliana (Mouse-ear cress)).